A 1583-amino-acid chain; its full sequence is Pentafunctional AROM polypeptide (1583 aa).

The tract at residues 1-384 (MSNPTKISIL…YETRASVVAN (384 aa)) is 3-dehydroquinate synthase. Residues 44-46 (DTN), 81-84 (EVSK), 114-116 (GGV), and Asp119 each bind NAD(+). Arg130 is a 7-phospho-2-dehydro-3-deoxy-D-arabino-heptonate binding site. An NAD(+)-binding site is contributed by 139–140 (TT). The 7-phospho-2-dehydro-3-deoxy-D-arabino-heptonate site is built by Asp146 and Lys152. Lys161 serves as a coordination point for NAD(+). Asn162 serves as a coordination point for 7-phospho-2-dehydro-3-deoxy-D-arabino-heptonate. NAD(+) is bound by residues 179-182 (FLET) and Asn190. A Zn(2+)-binding site is contributed by Glu194. Residues 194–197 (EVIK) and Lys250 contribute to the 7-phospho-2-dehydro-3-deoxy-D-arabino-heptonate site. The Proton acceptor; for 3-dehydroquinate synthase activity role is filled by Glu260. 7-phospho-2-dehydro-3-deoxy-D-arabino-heptonate contacts are provided by residues 264–268 (RNLLN) and His271. His271 is a Zn(2+) binding site. His275 serves as the catalytic Proton acceptor; for 3-dehydroquinate synthase activity. 2 residues coordinate 7-phospho-2-dehydro-3-deoxy-D-arabino-heptonate: His287 and Lys356. His287 is a binding site for Zn(2+). Residues 397–842 (VHPGVAQSSN…WDTLRQLFKV (446 aa)) are EPSP synthase. Residue Cys824 is the For EPSP synthase activity of the active site. The interval 863 to 1055 (NASIYIIGMR…KEKEHSFFAS (193 aa)) is shikimate kinase. Residue 870-877 (GMRGAGKS) participates in ATP binding. The 3-dehydroquinase stretch occupies residues 1056 to 1276 (LTLPDLREAG…AAPGQLSATE (221 aa)). Catalysis depends on His1179, which acts as the Proton acceptor; for 3-dehydroquinate dehydratase activity. The active-site Schiff-base intermediate with substrate; for 3-dehydroquinate dehydratase activity is Lys1207. Residues 1289 to 1583 (PKKFAIFGSP…SARACSSPLI (295 aa)) are shikimate dehydrogenase.

In the N-terminal section; belongs to the sugar phosphate cyclases superfamily. Dehydroquinate synthase family. The protein in the 2nd section; belongs to the EPSP synthase family. This sequence in the 3rd section; belongs to the shikimate kinase family. It in the 4th section; belongs to the type-I 3-dehydroquinase family. In the C-terminal section; belongs to the shikimate dehydrogenase family. Homodimer. Zn(2+) serves as cofactor.

It is found in the cytoplasm. The enzyme catalyses 7-phospho-2-dehydro-3-deoxy-D-arabino-heptonate = 3-dehydroquinate + phosphate. It catalyses the reaction 3-dehydroquinate = 3-dehydroshikimate + H2O. The catalysed reaction is shikimate + NADP(+) = 3-dehydroshikimate + NADPH + H(+). It carries out the reaction shikimate + ATP = 3-phosphoshikimate + ADP + H(+). The enzyme catalyses 3-phosphoshikimate + phosphoenolpyruvate = 5-O-(1-carboxyvinyl)-3-phosphoshikimate + phosphate. It participates in metabolic intermediate biosynthesis; chorismate biosynthesis; chorismate from D-erythrose 4-phosphate and phosphoenolpyruvate: step 2/7. Its pathway is metabolic intermediate biosynthesis; chorismate biosynthesis; chorismate from D-erythrose 4-phosphate and phosphoenolpyruvate: step 3/7. It functions in the pathway metabolic intermediate biosynthesis; chorismate biosynthesis; chorismate from D-erythrose 4-phosphate and phosphoenolpyruvate: step 4/7. The protein operates within metabolic intermediate biosynthesis; chorismate biosynthesis; chorismate from D-erythrose 4-phosphate and phosphoenolpyruvate: step 5/7. It participates in metabolic intermediate biosynthesis; chorismate biosynthesis; chorismate from D-erythrose 4-phosphate and phosphoenolpyruvate: step 6/7. Functionally, the AROM polypeptide catalyzes 5 consecutive enzymatic reactions in prechorismate polyaromatic amino acid biosynthesis. This Emericella nidulans (strain FGSC A4 / ATCC 38163 / CBS 112.46 / NRRL 194 / M139) (Aspergillus nidulans) protein is Pentafunctional AROM polypeptide (aromA).